The sequence spans 365 residues: Uroporphyrinogen decarboxylase (365 aa).

Residues 27 to 31, Asp-77, Tyr-154, Thr-209, and His-327 contribute to the substrate site; that span reads RQAGR.

This sequence belongs to the uroporphyrinogen decarboxylase family. As to quaternary structure, homodimer.

The protein localises to the cytoplasm. The enzyme catalyses uroporphyrinogen III + 4 H(+) = coproporphyrinogen III + 4 CO2. It functions in the pathway porphyrin-containing compound metabolism; protoporphyrin-IX biosynthesis; coproporphyrinogen-III from 5-aminolevulinate: step 4/4. In terms of biological role, catalyzes the decarboxylation of four acetate groups of uroporphyrinogen-III to yield coproporphyrinogen-III. This is Uroporphyrinogen decarboxylase from Nitrosospira multiformis (strain ATCC 25196 / NCIMB 11849 / C 71).